A 180-amino-acid polypeptide reads, in one-letter code: Ribulose bisphosphate carboxylase small subunit, chloroplastic 4 (180 aa).

Residues 1 to 56 (MASSIVSSAAVATRGNGAQASMVAPFTGLKSTASFPVSRKQNLDITSIASNGGRVS) constitute a chloroplast transit peptide.

It belongs to the RuBisCO small chain family. Heterohexadecamer of 8 large and 8 small subunits. In terms of assembly, (Microbial infection) Binds to tobamovirus movement protein; this interaction seems required for viral systemic movement.

The protein localises to the plastid. Its subcellular location is the chloroplast. The protein resides in the cell junction. It is found in the plasmodesma. Its function is as follows. RuBisCO catalyzes two reactions: the carboxylation of D-ribulose 1,5-bisphosphate, the primary event in carbon dioxide fixation, as well as the oxidative fragmentation of the pentose substrate. Both reactions occur simultaneously and in competition at the same active site. Although the small subunit is not catalytic it is essential for maximal activity. Involved in antiviral defenses. In Solanum lycopersicum (Tomato), this protein is Ribulose bisphosphate carboxylase small subunit, chloroplastic 4.